Reading from the N-terminus, the 344-residue chain is Putative glycosyltransferase EpsH (344 aa).

The protein belongs to the glycosyltransferase 2 family.

Functionally, may be involved in the production of the exopolysaccharide (EPS) component of the extracellular matrix during biofilm formation. EPS is responsible for the adhesion of chains of cells into bundles. Required for biofilm maintenance. This is Putative glycosyltransferase EpsH (epsH) from Bacillus subtilis (strain 168).